We begin with the raw amino-acid sequence, 581 residues long: Arginine--tRNA ligase (581 aa).

The 'HIGH' region signature appears at 123–133 (PNVAKEMHVGH).

It belongs to the class-I aminoacyl-tRNA synthetase family. As to quaternary structure, monomer.

It localises to the cytoplasm. The catalysed reaction is tRNA(Arg) + L-arginine + ATP = L-arginyl-tRNA(Arg) + AMP + diphosphate. The polypeptide is Arginine--tRNA ligase (Blochmanniella pennsylvanica (strain BPEN)).